Reading from the N-terminus, the 339-residue chain is Cullin-associated NEDD8-dissociated protein 1, N-terminal part (339 aa).

2 HEAT repeats span residues 5 to 42 and 50 to 87; these read HTIQQNLNGLLSKLNDPDPDMRYMSLNDLYGILSNPCS and ASATRLAEGLLKALDDQHGDVQNQALKCLGPLVARLPL.

Interacts with candA-C. Interacts with unneddylated cullins culA and culD; interaction occurs only when complexed with candA-C.

The protein localises to the nucleus. Its function is as follows. Assembly factor of SCF (SKP1-CUL1-F-box protein) E3 ubiquitin ligase complexes that promotes the exchange of the substrate-recognition F-box subunit in SCF complexes, thereby playing a key role in the cellular repertoire of SCF complexes. Acts as a F-box protein exchange factor when interacting with candA-C. The chain is Cullin-associated NEDD8-dissociated protein 1, N-terminal part (candA-N) from Emericella nidulans (strain FGSC A4 / ATCC 38163 / CBS 112.46 / NRRL 194 / M139) (Aspergillus nidulans).